The primary structure comprises 331 residues: Tyrosine recombinase XerD (331 aa).

Residues 8-93 form the Core-binding (CB) domain; that stretch reads GRDGARLESF…SMRQFYRFLY (86 aa). Positions 114 to 318 constitute a Tyr recombinase domain; sequence ALPKTMSVAD…LEERLQELVQ (205 aa). Catalysis depends on residues R161 and K185. Over residues 214 to 228 the composition is skewed to basic and acidic residues; it reads QEKSKAAASQKKTDT. The segment at 214 to 239 is disordered; the sequence is QEKSKAAASQKKTDTAESPWLFPSNS. Active-site residues include H270, R273, and H296. Y305 functions as the O-(3'-phospho-DNA)-tyrosine intermediate in the catalytic mechanism.

It belongs to the 'phage' integrase family. XerD subfamily. As to quaternary structure, forms a cyclic heterotetrameric complex composed of two molecules of XerC and two molecules of XerD.

The protein resides in the cytoplasm. Its function is as follows. Site-specific tyrosine recombinase, which acts by catalyzing the cutting and rejoining of the recombining DNA molecules. The XerC-XerD complex is essential to convert dimers of the bacterial chromosome into monomers to permit their segregation at cell division. It also contributes to the segregational stability of plasmids. The protein is Tyrosine recombinase XerD of Agrobacterium fabrum (strain C58 / ATCC 33970) (Agrobacterium tumefaciens (strain C58)).